The sequence spans 259 residues: L-arginine-binding protein (259 aa).

An N-terminal signal peptide occupies residues 1-21; that stretch reads MKKLALLGALALSVLSLPTFA.

It belongs to the bacterial solute-binding protein 3 family.

The protein localises to the periplasm. Its function is as follows. Binds L-arginine with high affinity. Shows no measurable affinity for L-ornithine. In Pseudomonas aeruginosa (strain ATCC 15692 / DSM 22644 / CIP 104116 / JCM 14847 / LMG 12228 / 1C / PRS 101 / PAO1), this protein is L-arginine-binding protein.